The chain runs to 441 residues: tRNA modification GTPase MnmE (441 aa).

Residues Arg-21, Glu-78, and Lys-117 each contribute to the (6S)-5-formyl-5,6,7,8-tetrahydrofolate site. Residues 211–363 (GIVMTIVGKP…LENKIVSKVK (153 aa)) form the TrmE-type G domain. Residue Asn-221 coordinates K(+). Residues 221-226 (NSGKST), 240-246 (TDIPGTT), and 265-268 (DTAG) each bind GTP. Ser-225 contributes to the Mg(2+) binding site. Thr-240, Ile-242, and Thr-245 together coordinate K(+). Residue Thr-246 coordinates Mg(2+). Residue Lys-441 participates in (6S)-5-formyl-5,6,7,8-tetrahydrofolate binding.

Belongs to the TRAFAC class TrmE-Era-EngA-EngB-Septin-like GTPase superfamily. TrmE GTPase family. In terms of assembly, homodimer. Heterotetramer of two MnmE and two MnmG subunits. K(+) serves as cofactor.

The protein localises to the cytoplasm. In terms of biological role, exhibits a very high intrinsic GTPase hydrolysis rate. Involved in the addition of a carboxymethylaminomethyl (cmnm) group at the wobble position (U34) of certain tRNAs, forming tRNA-cmnm(5)s(2)U34. In Thermosipho melanesiensis (strain DSM 12029 / CIP 104789 / BI429), this protein is tRNA modification GTPase MnmE.